The chain runs to 252 residues: Floral homeotic protein AGAMOUS (252 aa).

The interval 1-20 is disordered; it reads MAYQSELGGDSSPLRKSGRG. Positions 19–73 constitute an MADS-box domain; it reads RGKIEIKRIENTTNRQVTFCKRRNGLLKKAYELSVLCDAEVALIVFSSRGRLYEY. Positions 99–166 form a coiled coil; the sequence is AEINAQYYQQ…KKNELLFSEI (68 aa). The 91-residue stretch at 103–193 folds into the K-box domain; it reads AQYYQQESAK…RAKIAENERN (91 aa).

As to quaternary structure, homodimer, capable of binding to CArG-box sequences. Forms a heterodimer via the K-box domain with either SEPALATTA1/AGL2, SEPALATTA2/AGL4, SEPALLATA3/AGL9 or AGL6. Heterodimerization also seen with some other Agamous-like MADS-box proteins. Interacts with AGL15 and AGL16. Component of a complex made of FLOR1, VSP1 and AGAMOUS (AG). Binds directly with FLR1. In terms of tissue distribution, detected early in the floral meristem but mostly expressed in stamen and carpel primordia.

The protein resides in the nucleus. Functionally, probable transcription factor involved in the control of organ identity during the early development of flowers. Is required for normal development of stamens and carpels in the wild-type flower. Plays a role in maintaining the determinacy of the floral meristem. Acts as C class cadastral protein by repressing the A class floral homeotic genes like APETALA1. Forms a heterodimer via the K-box domain with either SEPALATTA1/AGL2, SEPALATTA2/AGL4, SEPALLATA3/AGL9 or AGL6 that could be involved in genes regulation during floral meristem development. Controls AHL21/GIK, a multifunctional chromatin modifier in reproductive organ patterning and differentiation. Induces microsporogenesis through the activation of SPL/NZZ. The chain is Floral homeotic protein AGAMOUS (AG) from Arabidopsis thaliana (Mouse-ear cress).